The sequence spans 738 residues: 1,4-alpha-glucan branching enzyme GlgB (738 aa).

Aspartate 417 serves as the catalytic Nucleophile. Glutamate 472 (proton donor) is an active-site residue.

This sequence belongs to the glycosyl hydrolase 13 family. GlgB subfamily. As to quaternary structure, monomer.

It carries out the reaction Transfers a segment of a (1-&gt;4)-alpha-D-glucan chain to a primary hydroxy group in a similar glucan chain.. It participates in glycan biosynthesis; glycogen biosynthesis. Its function is as follows. Catalyzes the formation of the alpha-1,6-glucosidic linkages in glycogen by scission of a 1,4-alpha-linked oligosaccharide from growing alpha-1,4-glucan chains and the subsequent attachment of the oligosaccharide to the alpha-1,6 position. The polypeptide is 1,4-alpha-glucan branching enzyme GlgB (Burkholderia pseudomallei (strain 668)).